The sequence spans 242 residues: uncharacterized protein (242 aa).

2 disordered regions span residues 43–70 and 112–162; these read SRRSGKTSAVLKAGRQSVSGRKNSTSKD and RMSR…VTPR. A compositionally biased stretch (polar residues) spans 58 to 70; sequence QSVSGRKNSTSKD. Composition is skewed to low complexity over residues 122 to 139 and 147 to 162; these read ERAAAAAAAAAGGDAGHA and ADGARAPRSPGQVTPR.

This is an uncharacterized protein from Homo sapiens (Human).